The sequence spans 388 residues: Succinate--CoA ligase [ADP-forming] subunit beta (388 aa).

The 236-residue stretch at 9–244 (KSLFAEYGLP…PSQDDAREAH (236 aa)) folds into the ATP-grasp domain. Residues Lys46, 53-55 (GRG), Glu99, Thr102, and Glu107 each bind ATP. The Mg(2+) site is built by Asn199 and Asp213. Substrate contacts are provided by residues Asn264 and 321 to 323 (GIV).

The protein belongs to the succinate/malate CoA ligase beta subunit family. Heterotetramer of two alpha and two beta subunits. Mg(2+) serves as cofactor.

It catalyses the reaction succinate + ATP + CoA = succinyl-CoA + ADP + phosphate. The catalysed reaction is GTP + succinate + CoA = succinyl-CoA + GDP + phosphate. The protein operates within carbohydrate metabolism; tricarboxylic acid cycle; succinate from succinyl-CoA (ligase route): step 1/1. Functionally, succinyl-CoA synthetase functions in the citric acid cycle (TCA), coupling the hydrolysis of succinyl-CoA to the synthesis of either ATP or GTP and thus represents the only step of substrate-level phosphorylation in the TCA. The beta subunit provides nucleotide specificity of the enzyme and binds the substrate succinate, while the binding sites for coenzyme A and phosphate are found in the alpha subunit. The chain is Succinate--CoA ligase [ADP-forming] subunit beta from Shewanella putrefaciens (strain CN-32 / ATCC BAA-453).